The following is a 131-amino-acid chain: Profilin-8 (131 aa).

An intrachain disulfide couples cysteine 13 to cysteine 115. The short motif at 81–97 (AVIRGKKGSGGITVKKT) is the Involved in PIP2 interaction element. A Phosphothreonine modification is found at threonine 111.

The protein belongs to the profilin family. Occurs in many kinds of cells as a complex with monomeric actin in a 1:1 ratio. Post-translationally, phosphorylated by MAP kinases.

It is found in the cytoplasm. Its subcellular location is the cytoskeleton. Its function is as follows. Binds to actin and affects the structure of the cytoskeleton. At high concentrations, profilin prevents the polymerization of actin, whereas it enhances it at low concentrations. This chain is Profilin-8, found in Zea mays (Maize).